A 341-amino-acid chain; its full sequence is MKTNEFDFDLPDRLIAQTPLEKRDHSRLMVLDKNKQEIVHKHFYDITDYLNPGDCLVINNTRVLPARLFGVKENTGGKMEFLLLKRIDLNTWEVLVKPGKKAKIGSRFEFGEGILKAEVLSMADEGARIVRFEYEGVFEELLDQLGKMPLPPYITEELADRERYQTVYSKHEGSSAAPTAGLHFTPELLSEIKKKGINVVSITLHVGLGTFRPVKVDSLENHEMHAEYYEITEEAAQVINDTKKAGNRVFAVGTTSCRTLESASTEKGKIEANKGWTNIFIFPGYQFKILDGLITNFHLPESTLIMLVSALLGKEKTLQAYKVAVDEQYRFFSFGDAMLIV.

This sequence belongs to the QueA family. As to quaternary structure, monomer.

The protein localises to the cytoplasm. It catalyses the reaction 7-aminomethyl-7-carbaguanosine(34) in tRNA + S-adenosyl-L-methionine = epoxyqueuosine(34) in tRNA + adenine + L-methionine + 2 H(+). It participates in tRNA modification; tRNA-queuosine biosynthesis. Transfers and isomerizes the ribose moiety from AdoMet to the 7-aminomethyl group of 7-deazaguanine (preQ1-tRNA) to give epoxyqueuosine (oQ-tRNA). This is S-adenosylmethionine:tRNA ribosyltransferase-isomerase from Alkaliphilus metalliredigens (strain QYMF).